Reading from the N-terminus, the 558-residue chain is Tektin-5 (558 aa).

A coiled-coil region spans residues 347 to 381; that stretch reads ISEETDVKNKLQTQLAKILQEIFQAENTIMLLERA.

It belongs to the tektin family. As to quaternary structure, microtubule inner protein component of sperm flagellar doublet microtubules. Interacts with TEKT3. Post-translationally, ubiquitinated, leading to its degradation. Deubiquitinated by USP16, promoting its stability. In terms of tissue distribution, specifically expressed in testis.

It localises to the cytoplasm. The protein resides in the cytoskeleton. The protein localises to the flagellum axoneme. In terms of biological role, sperm-specific microtubule inner protein (MIP) part of the dynein-decorated doublet microtubules (DMTs) in flagellar axoneme. Forms an extensive interaction network in different conformations that reinforces the helix bundle composed by other tektin proteins (TEKT1 to TEKT4) and MIPs to anchor the tektin bundle onto the tubulin wall of A-tubule of the sperm flagellum. The polypeptide is Tektin-5 (Rattus norvegicus (Rat)).